The sequence spans 151 residues: Large ribosomal subunit protein uL22 (151 aa).

Belongs to the universal ribosomal protein uL22 family. As to quaternary structure, part of the 50S ribosomal subunit.

Functionally, this protein binds specifically to 23S rRNA. It makes multiple contacts with different domains of the 23S rRNA in the assembled 50S subunit and ribosome. The globular domain of the protein is located near the polypeptide exit tunnel on the outside of the subunit, while an extended beta-hairpin is found that lines the wall of the exit tunnel in the center of the 70S ribosome. The protein is Large ribosomal subunit protein uL22 of Thermoplasma acidophilum (strain ATCC 25905 / DSM 1728 / JCM 9062 / NBRC 15155 / AMRC-C165).